A 351-amino-acid chain; its full sequence is uncharacterized protein (351 aa).

This is an uncharacterized protein from Schizosaccharomyces pombe (strain 972 / ATCC 24843) (Fission yeast).